A 634-amino-acid polypeptide reads, in one-letter code: Threonine--tRNA ligase (634 aa).

Positions methionine 1–threonine 61 constitute a TGS domain. Residues aspartate 241–proline 532 form a catalytic region. Residues cysteine 332, histidine 383, and histidine 509 each coordinate Zn(2+).

This sequence belongs to the class-II aminoacyl-tRNA synthetase family. As to quaternary structure, homodimer. It depends on Zn(2+) as a cofactor.

It is found in the cytoplasm. It carries out the reaction tRNA(Thr) + L-threonine + ATP = L-threonyl-tRNA(Thr) + AMP + diphosphate + H(+). Functionally, catalyzes the attachment of threonine to tRNA(Thr) in a two-step reaction: L-threonine is first activated by ATP to form Thr-AMP and then transferred to the acceptor end of tRNA(Thr). Also edits incorrectly charged L-seryl-tRNA(Thr). This is Threonine--tRNA ligase from Francisella tularensis subsp. holarctica (strain FTNF002-00 / FTA).